The following is a 373-amino-acid chain: 3-dehydroquinate synthase (373 aa).

NAD(+)-binding positions include 67 to 72, 101 to 105, 125 to 126, K138, and K147; these read EGEQAK, GVVLD, and TT. 3 residues coordinate Zn(2+): E180, H240, and H256.

The protein belongs to the sugar phosphate cyclases superfamily. Dehydroquinate synthase family. NAD(+) serves as cofactor. Requires Co(2+) as cofactor. The cofactor is Zn(2+).

It localises to the cytoplasm. It catalyses the reaction 7-phospho-2-dehydro-3-deoxy-D-arabino-heptonate = 3-dehydroquinate + phosphate. It participates in metabolic intermediate biosynthesis; chorismate biosynthesis; chorismate from D-erythrose 4-phosphate and phosphoenolpyruvate: step 2/7. Catalyzes the conversion of 3-deoxy-D-arabino-heptulosonate 7-phosphate (DAHP) to dehydroquinate (DHQ). The chain is 3-dehydroquinate synthase (aroB) from Chlamydia muridarum (strain MoPn / Nigg).